A 210-amino-acid polypeptide reads, in one-letter code: NADH dehydrogenase [ubiquinone] iron-sulfur protein 8, mitochondrial (210 aa).

The N-terminal 34 residues, 1 to 34 (MRCLTTPVLLRALAQAARAGPPGGRSLHSSAVAA), are a transit peptide targeting the mitochondrion. 4Fe-4S ferredoxin-type domains are found at residues 102–131 (RRYP…IEAE) and 141–170 (TRYD…EGPN). 8 residues coordinate [4Fe-4S] cluster: C111, C114, C117, C121, C150, C153, C156, and C160.

The protein belongs to the complex I 23 kDa subunit family. Core subunit of respiratory chain NADH dehydrogenase (Complex I) which is composed of 45 different subunits. This is a component of the iron-sulfur (IP) fragment of the enzyme. Interacts with RAB5IF. It depends on [4Fe-4S] cluster as a cofactor.

Its subcellular location is the mitochondrion inner membrane. It carries out the reaction a ubiquinone + NADH + 5 H(+)(in) = a ubiquinol + NAD(+) + 4 H(+)(out). Functionally, core subunit of the mitochondrial membrane respiratory chain NADH dehydrogenase (Complex I) which catalyzes electron transfer from NADH through the respiratory chain, using ubiquinone as an electron acceptor. Essential for the catalytic activity and assembly of complex I. This chain is NADH dehydrogenase [ubiquinone] iron-sulfur protein 8, mitochondrial (NDUFS8), found in Gorilla gorilla gorilla (Western lowland gorilla).